The chain runs to 382 residues: Anhydro-N-acetylmuramic acid kinase (382 aa).

9-16 (GTSLDGID) is an ATP binding site.

The protein belongs to the anhydro-N-acetylmuramic acid kinase family.

It catalyses the reaction 1,6-anhydro-N-acetyl-beta-muramate + ATP + H2O = N-acetyl-D-muramate 6-phosphate + ADP + H(+). It functions in the pathway amino-sugar metabolism; 1,6-anhydro-N-acetylmuramate degradation. The protein operates within cell wall biogenesis; peptidoglycan recycling. Catalyzes the specific phosphorylation of 1,6-anhydro-N-acetylmuramic acid (anhMurNAc) with the simultaneous cleavage of the 1,6-anhydro ring, generating MurNAc-6-P. Is required for the utilization of anhMurNAc either imported from the medium or derived from its own cell wall murein, and thus plays a role in cell wall recycling. This Bacillus cereus (strain 03BB102) protein is Anhydro-N-acetylmuramic acid kinase.